Consider the following 929-residue polypeptide: Bifunctional uridylyltransferase/uridylyl-removing enzyme (929 aa).

Residues 1-379 are uridylyltransferase; that stretch reads MSPSRPAADE…RPAAKRRRVP (379 aa). The segment at 380–735 is uridylyl-removing; sequence ESDDFVIDNN…VGFDEARAVT (356 aa). The 124-residue stretch at 495 to 618 folds into the HD domain; sequence VDEHLIRCVG…VETVEQMKML (124 aa). 2 ACT domains span residues 736-818 and 849-929; these read ELTI…AVAR and VIEV…KPAA.

This sequence belongs to the GlnD family. Mg(2+) serves as cofactor.

The catalysed reaction is [protein-PII]-L-tyrosine + UTP = [protein-PII]-uridylyl-L-tyrosine + diphosphate. It catalyses the reaction [protein-PII]-uridylyl-L-tyrosine + H2O = [protein-PII]-L-tyrosine + UMP + H(+). With respect to regulation, uridylyltransferase (UTase) activity is inhibited by glutamine, while glutamine activates uridylyl-removing (UR) activity. Modifies, by uridylylation and deuridylylation, the PII regulatory proteins (GlnB and homologs), in response to the nitrogen status of the cell that GlnD senses through the glutamine level. Under low glutamine levels, catalyzes the conversion of the PII proteins and UTP to PII-UMP and PPi, while under higher glutamine levels, GlnD hydrolyzes PII-UMP to PII and UMP (deuridylylation). Thus, controls uridylylation state and activity of the PII proteins, and plays an important role in the regulation of nitrogen fixation and metabolism. The sequence is that of Bifunctional uridylyltransferase/uridylyl-removing enzyme from Rhodopseudomonas palustris (strain ATCC BAA-98 / CGA009).